Reading from the N-terminus, the 128-residue chain is uncharacterized protein (128 aa).

Positions 2–127 constitute a VOC domain; sequence KLLQIRLLVN…DHNLIEIYKM (126 aa). Glu-48 and Glu-123 together coordinate Ni(2+).

This sequence belongs to the glyoxalase I family.

This is an uncharacterized protein from Bacillus subtilis (strain 168).